Consider the following 69-residue polypeptide: Guanine nucleotide-binding protein subunit gamma (69 aa).

Ser2 carries the post-translational modification N-acetylserine. Cys66 bears the Cysteine methyl ester mark. A lipid anchor (S-geranylgeranyl cysteine) is attached at Cys66. Positions 67-69 (SVL) are cleaved as a propeptide — removed in mature form.

It belongs to the G protein gamma family. In terms of assembly, g proteins are composed of 3 units, alpha, beta and gamma. Interacts with gpbA, and this requires phlp1. This protein is thought to be subject to lipidation, and this requires phlp1.

The protein resides in the cell membrane. Functionally, guanine nucleotide-binding proteins (G proteins) are involved as a modulator or transducer in various transmembrane signaling systems. This major G-protein of the squid photoreceptor is involved in visual transduction. The beta and gamma chains are required for the GTPase activity, for replacement of GDP by GTP, and for G protein-effector interaction. Required for normal chemotaxis in response to cAMP. The chain is Guanine nucleotide-binding protein subunit gamma (gpgA) from Dictyostelium discoideum (Social amoeba).